The primary structure comprises 617 residues: Tetratricopeptide repeat protein 39B (617 aa).

3 TPR repeats span residues 328–361, 520–553, and 561–594; these read SLIL…QEEW, CLVK…EKLL, and PFTL…YKDY.

It belongs to the TTC39 family. In terms of tissue distribution, high expression in lung and spleen. Low lower expression in liver and small intestine. Weak expression in heart, brain, kidney, adipose, and adrenal gland.

Its function is as follows. Regulates high density lipoprotein (HDL) cholesterol metabolism by promoting the ubiquitination and degradation of the oxysterols receptors LXR (NR1H2 and NR1H3). The protein is Tetratricopeptide repeat protein 39B of Mus musculus (Mouse).